Here is a 259-residue protein sequence, read N- to C-terminus: MEMMMTAAPRIAFLASTAEPAQRARQELMARYGDCSIEEADVLCALGGDGFMLRTLHRHGASGKPVYGMKLGSVGFLMNQYHDDLLERLQRAEPAKLRPLQMMAQTESGVSVESLAYNEVSLLRQTHQAAYISIDLNGQTRIDELTGDGVIVATPAGSTAYNYSAHGPILPLGSHTLALTPIAPYRPRRWRGAILKADTEIRLRVLDPYKRPVSVTADSHEIRDVVEVTIRESTEQRVTLLFDPEHNLEERIFSEQFAF.

The active-site Proton acceptor is D49. Residues 49 to 50 (DG), R54, 118 to 119 (NE), D148, A156, 159 to 164 (TAYNYS), and A183 contribute to the NAD(+) site.

It belongs to the NAD kinase family. A divalent metal cation is required as a cofactor.

The protein resides in the cytoplasm. The catalysed reaction is NAD(+) + ATP = ADP + NADP(+) + H(+). Its function is as follows. Involved in the regulation of the intracellular balance of NAD and NADP, and is a key enzyme in the biosynthesis of NADP. Catalyzes specifically the phosphorylation on 2'-hydroxyl of the adenosine moiety of NAD to yield NADP. The polypeptide is NAD kinase (Xylella fastidiosa (strain Temecula1 / ATCC 700964)).